We begin with the raw amino-acid sequence, 160 residues long: Twist-related protein 2 (160 aa).

Residues methionine 1–glutamate 63 form a disordered region. Positions lysine 27 to lysine 37 are enriched in basic residues. The region spanning serine 66–leucine 117 is the bHLH domain.

As to quaternary structure, efficient DNA binding requires dimerization with another bHLH protein. Forms a heterodimer with TCF3/E12. Also interacts with MEF2C. As to expression, expressed at low levels in sclerotome and dermatome of somites, and in limb buds at 10.5 dpc. Accumulates predominantly in dermatome, prevertebrae and derivatives of branchial arches by 13 dpc. Also expressed near surface of embryo and in chondrogenic cells. In adult, expressed at low levels in skin, bladder, uterus, aorta and heart.

It is found in the nucleus. It localises to the cytoplasm. In terms of biological role, binds to the E-box consensus sequence 5'-CANNTG-3' as a heterodimer and inhibits transcriptional activation by MYOD1, MYOG, MEF2A and MEF2C. Also represses expression of pro-inflammatory cytokines such as TNFA and IL1B. Involved in postnatal glycogen storage and energy metabolism. Inhibits the premature or ectopic differentiation of preosteoblast cells during osteogenesis, possibly by changing the internal signal transduction response of osteoblasts to external growth factors. This Mus musculus (Mouse) protein is Twist-related protein 2 (Twist2).